We begin with the raw amino-acid sequence, 312 residues long: DNA-directed RNA polymerase subunit alpha (312 aa).

Residues methionine 1 to threonine 229 form an alpha N-terminal domain (alpha-NTD) region. An alpha C-terminal domain (alpha-CTD) region spans residues isoleucine 246–alanine 312.

The protein belongs to the RNA polymerase alpha chain family. As to quaternary structure, in cyanobacteria the RNAP catalytic core is composed of 2 alpha, 1 beta, 1 beta', 1 gamma and 1 omega subunit. When a sigma factor is associated with the core the holoenzyme is formed, which can initiate transcription.

It carries out the reaction RNA(n) + a ribonucleoside 5'-triphosphate = RNA(n+1) + diphosphate. Its function is as follows. DNA-dependent RNA polymerase catalyzes the transcription of DNA into RNA using the four ribonucleoside triphosphates as substrates. The chain is DNA-directed RNA polymerase subunit alpha from Parasynechococcus marenigrum (strain WH8102).